Here is a 122-residue protein sequence, read N- to C-terminus: Large ribosomal subunit protein uL14 (122 aa).

Belongs to the universal ribosomal protein uL14 family. As to quaternary structure, part of the 50S ribosomal subunit. Forms a cluster with proteins L3 and L19. In the 70S ribosome, L14 and L19 interact and together make contacts with the 16S rRNA in bridges B5 and B8.

Its function is as follows. Binds to 23S rRNA. Forms part of two intersubunit bridges in the 70S ribosome. This is Large ribosomal subunit protein uL14 from Chlorobium phaeobacteroides (strain BS1).